A 383-amino-acid chain; its full sequence is 23S rRNA (uracil(747)-C(5))-methyltransferase RlmC (383 aa).

[4Fe-4S] cluster contacts are provided by C3, C11, C14, and C89. Residues Q214, F243, E270, and N315 each contribute to the S-adenosyl-L-methionine site. C342 functions as the Nucleophile in the catalytic mechanism.

Belongs to the class I-like SAM-binding methyltransferase superfamily. RNA M5U methyltransferase family. RlmC subfamily.

The enzyme catalyses uridine(747) in 23S rRNA + S-adenosyl-L-methionine = 5-methyluridine(747) in 23S rRNA + S-adenosyl-L-homocysteine + H(+). Catalyzes the formation of 5-methyl-uridine at position 747 (m5U747) in 23S rRNA. This is 23S rRNA (uracil(747)-C(5))-methyltransferase RlmC from Actinobacillus succinogenes (strain ATCC 55618 / DSM 22257 / CCUG 43843 / 130Z).